The chain runs to 136 residues: Large ribosomal subunit protein uL16 (136 aa).

The protein belongs to the universal ribosomal protein uL16 family. Part of the 50S ribosomal subunit.

In terms of biological role, binds 23S rRNA and is also seen to make contacts with the A and possibly P site tRNAs. The protein is Large ribosomal subunit protein uL16 of Mesomycoplasma hyopneumoniae (strain 232) (Mycoplasma hyopneumoniae).